We begin with the raw amino-acid sequence, 798 residues long: Disintegrin and metalloproteinase domain-containing protein B (798 aa).

A signal peptide spans 1–23; that stretch reads MKAFSCLLAVIATAASLFQHVDA. Residues 24 to 706 lie on the Extracellular side of the membrane; that stretch reads SHARDKLNNI…VSDWVSRHKP (683 aa). 5 N-linked (GlcNAc...) asparagine glycosylation sites follow: Asn-32, Asn-226, Asn-227, Asn-313, and Asn-407. The Peptidase M12B domain occupies 271 to 510; it reads KVALIGVVAD…RTILTNCLTT (240 aa). Cystine bridges form between Cys-395–Cys-495, Cys-448–Cys-459, and Cys-580–Cys-600. His-431 contacts Zn(2+). The active site involves Glu-432. His-435 and His-441 together coordinate Zn(2+). In terms of domain architecture, Disintegrin spans 519 to 608; sequence GQQCGNGIVE…DCPHDIHSKD (90 aa). A helical membrane pass occupies residues 707 to 727; that stretch reads IVIGVAVGAGCLLLLAIASCI. At 728 to 798 the chain is on the cytoplasmic side; the sequence is CGRSRRQRPR…PGHMPPTRYA (71 aa). Residues 734–798 are disordered; it reads QRPRNRKMPP…PGHMPPTRYA (65 aa). The segment covering 775–792 has biased composition (pro residues); that stretch reads NNIPPPINAPPPAYPGHM.

It depends on Zn(2+) as a cofactor.

It localises to the membrane. Its function is as follows. Probable zinc protease. This chain is Disintegrin and metalloproteinase domain-containing protein B (ADM-B), found in Trichophyton verrucosum (strain HKI 0517).